Here is a 69-residue protein sequence, read N- to C-terminus: Sec-independent protein translocase protein TatA (69 aa).

Residues 1–21 traverse the membrane as a helical segment; it reads MFGLGGQELVLILLIILLLFG. The interval 48–69 is disordered; the sequence is EELNKAVDDTPEKEKKSSSEKS.

This sequence belongs to the TatA/E family. Forms a complex with TatC.

It localises to the cell inner membrane. In terms of biological role, part of the twin-arginine translocation (Tat) system that transports large folded proteins containing a characteristic twin-arginine motif in their signal peptide across membranes. TatA could form the protein-conducting channel of the Tat system. In Chlorobium phaeobacteroides (strain BS1), this protein is Sec-independent protein translocase protein TatA.